The sequence spans 101 residues: Small ribosomal subunit protein uS14 (101 aa).

This sequence belongs to the universal ribosomal protein uS14 family. Part of the 30S ribosomal subunit. Contacts proteins S3 and S10.

Its function is as follows. Binds 16S rRNA, required for the assembly of 30S particles and may also be responsible for determining the conformation of the 16S rRNA at the A site. The sequence is that of Small ribosomal subunit protein uS14 from Opitutus terrae (strain DSM 11246 / JCM 15787 / PB90-1).